A 244-amino-acid chain; its full sequence is tRNA uridine(34) hydroxylase (244 aa).

Residues 129 to 219 (QGRELVMLDT…GILKYFEETD (91 aa)) form the Rhodanese domain. Catalysis depends on Cys-183, which acts as the Cysteine persulfide intermediate.

The protein belongs to the TrhO family.

The enzyme catalyses uridine(34) in tRNA + AH2 + O2 = 5-hydroxyuridine(34) in tRNA + A + H2O. Functionally, catalyzes oxygen-dependent 5-hydroxyuridine (ho5U) modification at position 34 in tRNAs. The chain is tRNA uridine(34) hydroxylase from Bordetella bronchiseptica (strain ATCC BAA-588 / NCTC 13252 / RB50) (Alcaligenes bronchisepticus).